The chain runs to 263 residues: Large ribosomal subunit protein uL10m (263 aa).

Residues 1–29 constitute a mitochondrion transit peptide; the sequence is MPFSVEVEVFFLLVEDKLGWLPTLQPVRH. Positions 241–263 are disordered; it reads QHEGDCATSTEGKPHPPDPAPDS.

It belongs to the universal ribosomal protein uL10 family. As to quaternary structure, component of the mitochondrial ribosome large subunit (39S) which comprises a 16S rRNA and about 50 distinct proteins.

It is found in the mitochondrion. The sequence is that of Large ribosomal subunit protein uL10m (Mrpl10) from Rattus norvegicus (Rat).